Here is a 216-residue protein sequence, read N- to C-terminus: Probable chemoreceptor glutamine deamidase CheD (216 aa).

The protein belongs to the CheD family.

The catalysed reaction is L-glutaminyl-[protein] + H2O = L-glutamyl-[protein] + NH4(+). Functionally, probably deamidates glutamine residues to glutamate on methyl-accepting chemotaxis receptors (MCPs), playing an important role in chemotaxis. This Halorhodospira halophila (strain DSM 244 / SL1) (Ectothiorhodospira halophila (strain DSM 244 / SL1)) protein is Probable chemoreceptor glutamine deamidase CheD.